A 617-amino-acid polypeptide reads, in one-letter code: Tetratricopeptide repeat protein 39B (617 aa).

TPR repeat units lie at residues 328–361 (SLILFYHARIELLKGNTEKAQETFRKCISVQEEW), 520–553 (CLVKLLKGCCLKNLERPLQAELCFNHVVESEKLL), and 561–594 (PFTLFELAFLYKSQGEIDKAIKVLETARNNYKDY).

This sequence belongs to the TTC39 family. In terms of tissue distribution, high expression in lung and spleen. Low lower expression in liver and small intestine. Weak expression in heart, brain, kidney, adipose, and adrenal gland.

Regulates high density lipoprotein (HDL) cholesterol metabolism by promoting the ubiquitination and degradation of the oxysterols receptors LXR (NR1H2 and NR1H3). The polypeptide is Tetratricopeptide repeat protein 39B (Mus musculus (Mouse)).